The sequence spans 149 residues: Calmodulin-1 (149 aa).

Ala-2 carries the N-acetylalanine modification. EF-hand domains follow at residues 8–43 (EQIA…LGQN), 44–79 (PTEA…KMKD), 81–116 (DSEE…LGEK), and 117–149 (LTDE…MTSK). Positions 21, 23, 25, 27, 32, 57, 59, 61, 63, 68, 94, 96, 98, and 105 each coordinate Ca(2+). Lys-116 carries the post-translational modification N6,N6,N6-trimethyllysine. Ca(2+)-binding residues include Asp-130, Asp-132, Asp-134, Gln-136, and Glu-141.

It belongs to the calmodulin family.

Functionally, calmodulin mediates the control of a large number of enzymes, ion channels and other proteins by Ca(2+). Among the enzymes to be stimulated by the calmodulin-Ca(2+) complex are a number of protein kinases and phosphatases. This Branchiostoma floridae (Florida lancelet) protein is Calmodulin-1.